The sequence spans 274 residues: Formamidopyrimidine-DNA glycosylase (274 aa).

Pro2 (schiff-base intermediate with DNA) is an active-site residue. Glu3 functions as the Proton donor in the catalytic mechanism. The Proton donor; for beta-elimination activity role is filled by Lys60. Positions 93 and 112 each coordinate DNA. An FPG-type zinc finger spans residues 240 to 274; sequence FVYGRKGEPCKRCGTPIEKTVVAGRGTHYCPRCQR. The active-site Proton donor; for delta-elimination activity is Arg264.

The protein belongs to the FPG family. In terms of assembly, monomer. It depends on Zn(2+) as a cofactor.

It catalyses the reaction Hydrolysis of DNA containing ring-opened 7-methylguanine residues, releasing 2,6-diamino-4-hydroxy-5-(N-methyl)formamidopyrimidine.. It carries out the reaction 2'-deoxyribonucleotide-(2'-deoxyribose 5'-phosphate)-2'-deoxyribonucleotide-DNA = a 3'-end 2'-deoxyribonucleotide-(2,3-dehydro-2,3-deoxyribose 5'-phosphate)-DNA + a 5'-end 5'-phospho-2'-deoxyribonucleoside-DNA + H(+). Functionally, involved in base excision repair of DNA damaged by oxidation or by mutagenic agents. Acts as a DNA glycosylase that recognizes and removes damaged bases. Has a preference for oxidized purines, such as 7,8-dihydro-8-oxoguanine (8-oxoG). Has AP (apurinic/apyrimidinic) lyase activity and introduces nicks in the DNA strand. Cleaves the DNA backbone by beta-delta elimination to generate a single-strand break at the site of the removed base with both 3'- and 5'-phosphates. The polypeptide is Formamidopyrimidine-DNA glycosylase (Geobacillus kaustophilus (strain HTA426)).